The primary structure comprises 299 residues: Phosphatidylserine decarboxylase proenzyme (299 aa).

Residues D115, H171, and S258 each act as charge relay system; for autoendoproteolytic cleavage activity in the active site. S258 functions as the Schiff-base intermediate with substrate; via pyruvic acid; for decarboxylase activity in the catalytic mechanism. Pyruvic acid (Ser); by autocatalysis is present on S258.

It belongs to the phosphatidylserine decarboxylase family. PSD-B subfamily. Prokaryotic type II sub-subfamily. In terms of assembly, heterodimer of a large membrane-associated beta subunit and a small pyruvoyl-containing alpha subunit. Pyruvate is required as a cofactor. In terms of processing, is synthesized initially as an inactive proenzyme. Formation of the active enzyme involves a self-maturation process in which the active site pyruvoyl group is generated from an internal serine residue via an autocatalytic post-translational modification. Two non-identical subunits are generated from the proenzyme in this reaction, and the pyruvate is formed at the N-terminus of the alpha chain, which is derived from the carboxyl end of the proenzyme. The autoendoproteolytic cleavage occurs by a canonical serine protease mechanism, in which the side chain hydroxyl group of the serine supplies its oxygen atom to form the C-terminus of the beta chain, while the remainder of the serine residue undergoes an oxidative deamination to produce ammonia and the pyruvoyl prosthetic group on the alpha chain. During this reaction, the Ser that is part of the protease active site of the proenzyme becomes the pyruvoyl prosthetic group, which constitutes an essential element of the active site of the mature decarboxylase.

It localises to the cell membrane. The catalysed reaction is a 1,2-diacyl-sn-glycero-3-phospho-L-serine + H(+) = a 1,2-diacyl-sn-glycero-3-phosphoethanolamine + CO2. It participates in phospholipid metabolism; phosphatidylethanolamine biosynthesis; phosphatidylethanolamine from CDP-diacylglycerol: step 2/2. Catalyzes the formation of phosphatidylethanolamine (PtdEtn) from phosphatidylserine (PtdSer). This chain is Phosphatidylserine decarboxylase proenzyme, found in Chlamydia caviae (strain ATCC VR-813 / DSM 19441 / 03DC25 / GPIC) (Chlamydophila caviae).